The sequence spans 109 residues: Nucleoid-associated protein BUsg_467 (109 aa).

It belongs to the YbaB/EbfC family. As to quaternary structure, homodimer.

The protein resides in the cytoplasm. It is found in the nucleoid. Its function is as follows. Binds to DNA and alters its conformation. May be involved in regulation of gene expression, nucleoid organization and DNA protection. The polypeptide is Nucleoid-associated protein BUsg_467 (Buchnera aphidicola subsp. Schizaphis graminum (strain Sg)).